Here is a 362-residue protein sequence, read N- to C-terminus: NAD(P)H-quinone oxidoreductase subunit 1, chloroplastic (362 aa).

8 consecutive transmembrane segments (helical) span residues Ile-27–Val-47, Ile-94–Val-114, Ile-128–Gly-148, Ala-164–Leu-184, Phe-202–Leu-222, Tyr-247–Ser-267, Thr-303–Ile-323, and Leu-335–Thr-355.

The protein belongs to the complex I subunit 1 family. As to quaternary structure, NDH is composed of at least 16 different subunits, 5 of which are encoded in the nucleus.

It localises to the plastid. It is found in the chloroplast thylakoid membrane. The enzyme catalyses a plastoquinone + NADH + (n+1) H(+)(in) = a plastoquinol + NAD(+) + n H(+)(out). It carries out the reaction a plastoquinone + NADPH + (n+1) H(+)(in) = a plastoquinol + NADP(+) + n H(+)(out). Its function is as follows. NDH shuttles electrons from NAD(P)H:plastoquinone, via FMN and iron-sulfur (Fe-S) centers, to quinones in the photosynthetic chain and possibly in a chloroplast respiratory chain. The immediate electron acceptor for the enzyme in this species is believed to be plastoquinone. Couples the redox reaction to proton translocation, and thus conserves the redox energy in a proton gradient. The chain is NAD(P)H-quinone oxidoreductase subunit 1, chloroplastic (ndhA) from Oryza sativa (Rice).